The following is a 333-amino-acid chain: Atrochrysone carboxyl ACP thioesterase MYCFIDRAFT_190111 (333 aa).

Histidine 108, histidine 110, aspartate 112, and histidine 113 together coordinate Zn(2+). Aspartate 112 (proton donor/acceptor) is an active-site residue.

The protein belongs to the metallo-beta-lactamase superfamily. The cofactor is Zn(2+).

It catalyses the reaction atrochrysone carboxyl-[ACP] + H2O = atrochrysone carboxylate + holo-[ACP] + H(+). The protein operates within secondary metabolite biosynthesis. Its function is as follows. Atrochrysone carboxyl ACP thioesterase; part of the gene cluster that mediates the biosynthesis of an emodin derivative that may be involved in black Sigatoka disease of banana. The pathway begins with the synthesis of atrochrysone thioester by the polyketide synthase PKS8-1. The atrochrysone carboxyl ACP thioesterase MYCFIDRAFT_190111 then breaks the thioester bond and releases the atrochrysone carboxylic acid from PKS8-1. The decarboxylase MYCFIDRAFT_34057 then catalyzes the concerted decarboxylation-elimination required to convert atochrysone carboxylic acid into emodin anthrone, which is further oxidized to emodin by the anthrone oxygenase MYCFIDRAFT_34418. The functions of the other tailoring enzymes as well as the final product of the cluster have still to be identified. This Pseudocercospora fijiensis (strain CIRAD86) (Black leaf streak disease fungus) protein is Atrochrysone carboxyl ACP thioesterase MYCFIDRAFT_190111.